Here is a 61-residue protein sequence, read N- to C-terminus: UPF0434 protein PSPPH_1629 (61 aa).

It belongs to the UPF0434 family.

The chain is UPF0434 protein PSPPH_1629 from Pseudomonas savastanoi pv. phaseolicola (strain 1448A / Race 6) (Pseudomonas syringae pv. phaseolicola (strain 1448A / Race 6)).